The following is a 466-amino-acid chain: Cysteine--tRNA ligase (466 aa).

C28 lines the Zn(2+) pocket. Residues 30 to 40 carry the 'HIGH' region motif; sequence PTVYNYIHIGN. Zn(2+) contacts are provided by C208, H233, and E237. The 'KMSKS' region motif lies at 265–269; sequence KMSKS. ATP is bound at residue K268.

The protein belongs to the class-I aminoacyl-tRNA synthetase family. As to quaternary structure, monomer. Zn(2+) is required as a cofactor.

The protein localises to the cytoplasm. The catalysed reaction is tRNA(Cys) + L-cysteine + ATP = L-cysteinyl-tRNA(Cys) + AMP + diphosphate. In Staphylococcus aureus (strain USA300), this protein is Cysteine--tRNA ligase.